The sequence spans 312 residues: Malate dehydrogenase (312 aa).

Residues 7-13 and D34 contribute to the NAD(+) site; that span reads GAAGGIG. 2 residues coordinate substrate: R81 and R87. Residues N94 and 117 to 119 contribute to the NAD(+) site; that span reads ITN. Substrate contacts are provided by N119 and R153. H177 (proton acceptor) is an active-site residue. M227 serves as a coordination point for NAD(+).

This sequence belongs to the LDH/MDH superfamily. MDH type 1 family. In terms of assembly, homodimer.

The catalysed reaction is (S)-malate + NAD(+) = oxaloacetate + NADH + H(+). Functionally, catalyzes the reversible oxidation of malate to oxaloacetate. The sequence is that of Malate dehydrogenase from Salmonella dublin (strain CT_02021853).